Consider the following 270-residue polypeptide: Phthiotriol/phenolphthiotriol dimycocerosates methyltransferase (270 aa).

The protein belongs to the methyltransferase superfamily. Phthiotriol/phenolphthiotriol dimycocerosates methyltransferase family.

Its function is as follows. Catalyzes the methylation of the lipid moiety of the intermediate compounds phthiotriol and glycosylated phenolphthiotriol dimycoserosates to form phthiocerol dimycocerosates (DIM A) and glycosylated phenolphthiocerol dimycocerosates (PGL). The sequence is that of Phthiotriol/phenolphthiotriol dimycocerosates methyltransferase from Mycobacterium bovis (strain ATCC BAA-935 / AF2122/97).